The sequence spans 476 residues: Protein THYLAKOID RHODANESE-LIKE, chloroplastic (476 aa).

Residues 1-21 (MAATTTILSSAAPTPLTAPPR) constitute a chloroplast transit peptide. A disordered region spans residues 1–29 (MAATTTILSSAAPTPLTAPPRARARAPAA). Positions 11 to 21 (AAPTPLTAPPR) are enriched in low complexity. A thylakoid-targeting transit peptide spans 22 to 58 (ARARAPAARRRRLRARDILGAALGLANGGASAALAAP). A helical transmembrane segment spans residues 100–120 (LVAAAGVAAVALPLVLAQVLG). The Rhodanese domain maps to 140–246 (EEPGAQLVDI…WLSSSLPWTA (107 aa)). The next 2 membrane-spanning stretches (helical) occupy residues 264–284 (LPVT…YTEI) and 287–307 (VLQF…LIYA). A disordered region spans residues 342–476 (LPSTGTKSQP…PPSSPSPSAP (135 aa)). The span at 351–389 (PAITEAAPATAEAAPAAATATAAPPAAPVEETSTEAAPA) shows a compositional bias: low complexity. Pro residues predominate over residues 403-412 (LKPPSSPSPL). Positions 425–446 (ESAATESAPAVNSAPVAEAAPE) are enriched in low complexity. The span at 447–476 (AAPPAAPRPLSPYPNYPDLKPPSSPSPSAP) shows a compositional bias: pro residues.

As to quaternary structure, component of high molecular weight thylakoid LFNRs-containing protein complexes containing LIR1, LFNR1, LFNR2, TIC62 and TROL proteins.

It is found in the plastid. It localises to the chloroplast thylakoid membrane. Functionally, rhodanese domain-containing protein required for anchoring ferredoxin--NADP reductase to the thylakoid membranes and sustaining efficient linear electron flow (LEF). This chain is Protein THYLAKOID RHODANESE-LIKE, chloroplastic, found in Oryza sativa subsp. indica (Rice).